Consider the following 362-residue polypeptide: sn-glycerol-3-phosphate import ATP-binding protein UgpC (362 aa).

The ABC transporter domain occupies L4–I235. An ATP-binding site is contributed by G37 to S44.

This sequence belongs to the ABC transporter superfamily. sn-glycerol-3-phosphate importer (TC 3.A.1.1.3) family. As to quaternary structure, the complex is composed of two ATP-binding proteins (UgpC), two transmembrane proteins (UgpA and UgpE) and a solute-binding protein (UgpB).

The protein localises to the cell inner membrane. It carries out the reaction sn-glycerol 3-phosphate(out) + ATP + H2O = sn-glycerol 3-phosphate(in) + ADP + phosphate + H(+). Its function is as follows. Part of the ABC transporter complex UgpBAEC involved in sn-glycerol-3-phosphate (G3P) import. Responsible for energy coupling to the transport system. The polypeptide is sn-glycerol-3-phosphate import ATP-binding protein UgpC (Paraburkholderia xenovorans (strain LB400)).